The primary structure comprises 249 residues: Leucyl/phenylalanyl-tRNA--protein transferase (249 aa).

This sequence belongs to the L/F-transferase family.

The protein localises to the cytoplasm. It carries out the reaction N-terminal L-lysyl-[protein] + L-leucyl-tRNA(Leu) = N-terminal L-leucyl-L-lysyl-[protein] + tRNA(Leu) + H(+). It catalyses the reaction N-terminal L-arginyl-[protein] + L-leucyl-tRNA(Leu) = N-terminal L-leucyl-L-arginyl-[protein] + tRNA(Leu) + H(+). The catalysed reaction is L-phenylalanyl-tRNA(Phe) + an N-terminal L-alpha-aminoacyl-[protein] = an N-terminal L-phenylalanyl-L-alpha-aminoacyl-[protein] + tRNA(Phe). Its function is as follows. Functions in the N-end rule pathway of protein degradation where it conjugates Leu, Phe and, less efficiently, Met from aminoacyl-tRNAs to the N-termini of proteins containing an N-terminal arginine or lysine. This Xanthomonas axonopodis pv. citri (strain 306) protein is Leucyl/phenylalanyl-tRNA--protein transferase.